The sequence spans 422 residues: GTPase Obg (422 aa).

Residues 2-157 (AKFIDEIKLT…YLAHIVLKVM (156 aa)) form the Obg domain. Residues 158–325 (SDVGIIGKPS…LKGKIWKILE (168 aa)) enclose the OBG-type G domain. Residues 164-171 (GKPSAGKS), 189-193 (FTTLV), 210-213 (DLPG), 279-282 (NKSD), and 306-308 (SAI) each bind GTP. Mg(2+) is bound by residues serine 171 and threonine 191. The OCT domain maps to 334–420 (EEEETEENVE…ILDYEFEWDG (87 aa)).

This sequence belongs to the TRAFAC class OBG-HflX-like GTPase superfamily. OBG GTPase family. Monomer. Mg(2+) serves as cofactor.

It localises to the cytoplasm. In terms of biological role, an essential GTPase which binds GTP, GDP and possibly (p)ppGpp with moderate affinity, with high nucleotide exchange rates and a fairly low GTP hydrolysis rate. Plays a role in control of the cell cycle, stress response, ribosome biogenesis and in those bacteria that undergo differentiation, in morphogenesis control. This chain is GTPase Obg, found in Mycoplasmopsis agalactiae (strain NCTC 10123 / CIP 59.7 / PG2) (Mycoplasma agalactiae).